A 340-amino-acid polypeptide reads, in one-letter code: Fructose-bisphosphate aldolase (340 aa).

S53 provides a ligand contact to D-glyceraldehyde 3-phosphate. The active-site Proton donor is D95. 4 residues coordinate Zn(2+): H96, D131, E161, and H212. G213 serves as a coordination point for dihydroxyacetone phosphate. A Zn(2+)-binding site is contributed by H249. Residues 250–252 and 271–274 each bind dihydroxyacetone phosphate; these read GGS and NLDT.

Belongs to the class II fructose-bisphosphate aldolase family. It depends on Zn(2+) as a cofactor.

The enzyme catalyses beta-D-fructose 1,6-bisphosphate = D-glyceraldehyde 3-phosphate + dihydroxyacetone phosphate. Its pathway is carbohydrate degradation; glycolysis; D-glyceraldehyde 3-phosphate and glycerone phosphate from D-glucose: step 4/4. Functionally, catalyzes the aldol condensation of dihydroxyacetone phosphate (DHAP or glycerone-phosphate) with glyceraldehyde 3-phosphate (G3P) to form fructose 1,6-bisphosphate (FBP) in gluconeogenesis and the reverse reaction in glycolysis. This chain is Fructose-bisphosphate aldolase (fba), found in Streptomyces galbus.